Reading from the N-terminus, the 150-residue chain is Large ribosomal subunit protein bL9 (150 aa).

Belongs to the bacterial ribosomal protein bL9 family.

Binds to the 23S rRNA. The protein is Large ribosomal subunit protein bL9 of Erwinia tasmaniensis (strain DSM 17950 / CFBP 7177 / CIP 109463 / NCPPB 4357 / Et1/99).